Consider the following 517-residue polypeptide: Amidophosphoribosyltransferase (517 aa).

Met1 carries the post-translational modification N-acetylmethionine. A propeptide spanning residues 1-11 (MELEESGIREE) is cleaved from the precursor. The Nucleophile role is filled by Cys12. One can recognise a Glutamine amidotransferase type-2 domain in the interval 12–261 (CGVFGCIASG…PGEIVEISRH (250 aa)). Cys280 provides a ligand contact to [4Fe-4S] cluster. Mg(2+) is bound by residues Ser327, Asp389, and Asp390. [4Fe-4S] cluster contacts are provided by Cys426, Cys503, and Cys506.

In the C-terminal section; belongs to the purine/pyrimidine phosphoribosyltransferase family. As to quaternary structure, homotetramer. Mg(2+) serves as cofactor. The cofactor is [4Fe-4S] cluster. In terms of tissue distribution, expressed at a high level in brain, heart, liver and stomach.

The catalysed reaction is 5-phospho-beta-D-ribosylamine + L-glutamate + diphosphate = 5-phospho-alpha-D-ribose 1-diphosphate + L-glutamine + H2O. The protein operates within purine metabolism; IMP biosynthesis via de novo pathway; N(1)-(5-phospho-D-ribosyl)glycinamide from 5-phospho-alpha-D-ribose 1-diphosphate: step 1/2. Its activity is regulated as follows. Activated by the substrate 5-phospho-alpha-D-ribosyl-1-pyrophosphate and inhibited by the purine ribonucleotides, the end products of purine biosynthesis. In terms of biological role, catalyzes the formation of phosphoribosylamine from phosphoribosylpyrophosphate (PRPP) and glutamine. This is Amidophosphoribosyltransferase (Ppat) from Rattus norvegicus (Rat).